The primary structure comprises 94 residues: Mitochondrial import inner membrane translocase subunit Tim8 A (94 aa).

The short motif at 47-70 (CWDKCIDRPGNKLDSRTESCLVSC) is the Twin CX3C motif element. 2 cysteine pairs are disulfide-bonded: C47/C70 and C51/C66.

Belongs to the small Tim family. In terms of assembly, heterohexamer; composed of 3 copies of TIMM8A and 3 copies of TIMM13, named soluble 70 kDa complex. Associates with the TIM22 complex, whose core is composed of TIMM22.

The protein resides in the mitochondrion inner membrane. In terms of biological role, mitochondrial intermembrane chaperone that participates in the import and insertion of some multi-pass transmembrane proteins into the mitochondrial inner membrane. Also required for the transfer of beta-barrel precursors from the TOM complex to the sorting and assembly machinery (SAM complex) of the outer membrane. Acts as a chaperone-like protein that protects the hydrophobic precursors from aggregation and guide them through the mitochondrial intermembrane space. The TIMM8-TIMM13 complex mediates the import of some proteins while the predominant TIMM9-TIMM10 70 kDa complex mediates the import of much more proteins. This chain is Mitochondrial import inner membrane translocase subunit Tim8 A (timm8a), found in Xenopus laevis (African clawed frog).